We begin with the raw amino-acid sequence, 117 residues long: Large ribosomal subunit protein bL19 (117 aa).

Belongs to the bacterial ribosomal protein bL19 family.

In terms of biological role, this protein is located at the 30S-50S ribosomal subunit interface and may play a role in the structure and function of the aminoacyl-tRNA binding site. The chain is Large ribosomal subunit protein bL19 from Shewanella amazonensis (strain ATCC BAA-1098 / SB2B).